The chain runs to 452 residues: GTPase Der (452 aa).

2 consecutive EngA-type G domains span residues 4–169 and 177–352; these read PIVA…PAPQ and IKVA…QEHR. GTP contacts are provided by residues 10-17, 57-61, 120-123, 183-190, 230-234, and 295-298; these read GRPNVGKS, DTGGL, NKCE, DTAGI, and NKWD. Residues 353-439 enclose the KH-like domain; sequence RRVTTAVINE…IRLFWRGKKV (87 aa).

Belongs to the TRAFAC class TrmE-Era-EngA-EngB-Septin-like GTPase superfamily. EngA (Der) GTPase family. As to quaternary structure, associates with the 50S ribosomal subunit.

Its function is as follows. GTPase that plays an essential role in the late steps of ribosome biogenesis. This Synechocystis sp. (strain ATCC 27184 / PCC 6803 / Kazusa) protein is GTPase Der.